Here is a 353-residue protein sequence, read N- to C-terminus: UPF0283 membrane protein YPTS_2342 (353 aa).

3 helical membrane-spanning segments follow: residues 71–91 (MVTAGMVILGASVIAQSVQWV), 101–121 (IALGATTAGGLIILAGVGSVV), and 214–234 (ESALMIAVSPLALVDMAFIAW).

The protein belongs to the UPF0283 family.

It is found in the cell inner membrane. In Yersinia pseudotuberculosis serotype IB (strain PB1/+), this protein is UPF0283 membrane protein YPTS_2342.